Reading from the N-terminus, the 100-residue chain is Small ribosomal subunit protein uS14c (100 aa).

It belongs to the universal ribosomal protein uS14 family. In terms of assembly, part of the 30S ribosomal subunit.

Its subcellular location is the plastid. The protein resides in the chloroplast. In terms of biological role, binds 16S rRNA, required for the assembly of 30S particles. The chain is Small ribosomal subunit protein uS14c from Barbarea verna (Land cress).